We begin with the raw amino-acid sequence, 250 residues long: 2,3-bisphosphoglycerate-dependent phosphoglycerate mutase (250 aa).

Residues 8 to 15 (RHGESEWN), 21 to 22 (TG), R60, 87 to 90 (ERHY), K98, 114 to 115 (RR), and 183 to 184 (GN) contribute to the substrate site. H9 (tele-phosphohistidine intermediate) is an active-site residue. E87 serves as the catalytic Proton donor/acceptor.

It belongs to the phosphoglycerate mutase family. BPG-dependent PGAM subfamily.

It catalyses the reaction (2R)-2-phosphoglycerate = (2R)-3-phosphoglycerate. The protein operates within carbohydrate degradation; glycolysis; pyruvate from D-glyceraldehyde 3-phosphate: step 3/5. Its function is as follows. Catalyzes the interconversion of 2-phosphoglycerate and 3-phosphoglycerate. This is 2,3-bisphosphoglycerate-dependent phosphoglycerate mutase from Borrelia duttonii (strain Ly).